Here is a 288-residue protein sequence, read N- to C-terminus: MSNPESLKKQVEPPGYNELFMVEDVCNVDLEQGLDLCKPEKVNKQSQRSRQSRQSLFTNTIKPQKDKMNIKTNKIKEFLNDLFTEFSKFHNSYYPNGRISTQDKSRWVLLIIWSIITILTIDKKFKIKESYLEWIGENQSHSEIWGPIVIYVGLFILLLSAFNYCSKLIIKALPLISMVIAWVGVVIAAFSVIITATIAGVIAAFSVIITATIAGVIAAMVGILYFGHWLVYKILILAFGFKIVTSGDVCVSNTLPTHNGETALHSDATVGSDIEQIELQNMPTPVKK.

4 helical membrane-spanning segments follow: residues 107–127 (WVLLIIWSIITILTIDKKFKI), 144–164 (IWGPIVIYVGLFILLLSAFNY), 174–194 (PLISMVIAWVGVVIAAFSVII), and 198–218 (IAGVIAAFSVIITATIAGVIA).

This sequence belongs to the UPF0494 family.

It is found in the cytoplasm. It localises to the endoplasmic reticulum. The protein localises to the membrane. This chain is UPF0494 membrane protein C212.04c, found in Schizosaccharomyces pombe (strain 972 / ATCC 24843) (Fission yeast).